The sequence spans 861 residues: Actin-binding LIM protein 1 (861 aa).

4 LIM zinc-binding domains span residues 97 to 156, 156 to 216, 224 to 283, and 283 to 343; these read IHCH…MYGT, TRCH…MSSS, SNCA…LFGV, and VKCE…TKTE. Residue S216 is modified to Phosphoserine. The interval 374–414 is disordered; the sequence is LQLLSPPCLTNSNKNPRQPTRTSSESIYSRPGSSIPGSPGH. The span at 381–400 shows a compositional bias: polar residues; that stretch reads CLTNSNKNPRQPTRTSSESI. The span at 404 to 413 shows a compositional bias: low complexity; that stretch reads PGSSIPGSPG. S411 carries the post-translational modification Phosphoserine. A phosphotyrosine mark is found at Y417 and Y440. Disordered stretches follow at residues 459 to 590 and 634 to 682; these read EDKQ…PTYA and FPAA…ELLR. Phosphoserine is present on residues S466, S470, and S475. Residues 467–478 are compositionally biased toward polar residues; the sequence is LGESPRTLSPTP. T477 is subject to Phosphothreonine. Residue S479 is modified to Phosphoserine. Residue Y483 is modified to Phosphotyrosine. Polar residues predominate over residues 493 to 518; the sequence is RSTSQGSINSPVYSRHSYTPTTSRSP. Phosphoserine is present on residues S496, S499, and S502. Residues 536-546 show a composition bias toward low complexity; that stretch reads PLRTSSFSSTH. S582 and S671 each carry phosphoserine. Residues 673 to 723 are a coiled coil; that stretch reads REEDEEELLRRRQLQEEQLMKLNSGLGQLILKEEMEKESRERASLASRYDS. K704 is covalently cross-linked (Glycyl lysine isopeptide (Lys-Gly) (interchain with G-Cter in SUMO2)). Residues 713 to 748 are disordered; it reads ERASLASRYDSPLHSASHAPSSKTSSLPGYGKNGLH. 4 positions are modified to phosphoserine: S723, S738, S760, and S789. A compositionally biased stretch (low complexity) spans 724 to 738; the sequence is PLHSASHAPSSKTSS. Residues 793–861 form the HP domain; the sequence is MLEPKIFPYE…NDMKKKAKLF (69 aa).

In terms of assembly, binds F-actin. Interacts with ABRA. As to expression, isoform 1 is detected in adult retina, where it is highly expressed in the ganglion layer. Detected in rod inner segment. Isoform 2 is highly expressed in adult retina, brain, kidney and heart. Isoform 3 is highly expressed in adult retina, brain, kidney, liver, skeletal muscle, spleen and heart. Detected in embryonic retina, brain, spinal cord, peripheral sensory ganglia and thymus.

Its subcellular location is the cytoplasm. The protein localises to the cytoskeleton. Its function is as follows. May act as scaffold protein. May play a role in the development of the retina. Has been suggested to play a role in axon guidance. This chain is Actin-binding LIM protein 1 (Ablim1), found in Mus musculus (Mouse).